The primary structure comprises 142 residues: Small ribosomal subunit protein uS12 (142 aa).

Positions 1–44 (MANGKYAARKLKQDRQQRRWSDSEYARRERGLGAKSDPLEGAPQ) are disordered. The segment covering 11–32 (LKQDRQQRRWSDSEYARRERGL) has biased composition (basic and acidic residues).

This sequence belongs to the universal ribosomal protein uS12 family. Part of the 30S ribosomal subunit.

With S4 and S5 plays an important role in translational accuracy. Located at the interface of the 30S and 50S subunits. This chain is Small ribosomal subunit protein uS12, found in Haloquadratum walsbyi (strain DSM 16790 / HBSQ001).